Consider the following 991-residue polypeptide: Translation initiation factor IF-2 (991 aa).

Disordered stretches follow at residues glutamine 126–glutamate 220 and valine 325–lysine 359. 2 stretches are compositionally biased toward polar residues: residues glutamine 138–alanine 160 and proline 201–glutamine 210. Over residues lysine 326–alanine 340 the composition is skewed to low complexity. The segment covering glycine 343–lysine 353 has biased composition (basic residues). A tr-type G domain is found at isoleucine 488–lysine 658. Residues glycine 497 to threonine 504 form a G1 region. GTP is bound at residue glycine 497–threonine 504. Residues glycine 522 to histidine 526 form a G2 region. A G3 region spans residues aspartate 544 to glycine 547. GTP is bound by residues aspartate 544–histidine 548 and asparagine 598–aspartate 601. The G4 stretch occupies residues asparagine 598–aspartate 601. Residues serine 634 to lysine 636 are G5.

Belongs to the TRAFAC class translation factor GTPase superfamily. Classic translation factor GTPase family. IF-2 subfamily.

It is found in the cytoplasm. Its function is as follows. One of the essential components for the initiation of protein synthesis. Protects formylmethionyl-tRNA from spontaneous hydrolysis and promotes its binding to the 30S ribosomal subunits. Also involved in the hydrolysis of GTP during the formation of the 70S ribosomal complex. This is Translation initiation factor IF-2 from Chlorobium phaeobacteroides (strain DSM 266 / SMG 266 / 2430).